Consider the following 253-residue polypeptide: Imidazole glycerol phosphate synthase subunit HisF (253 aa).

Catalysis depends on residues Asp-11 and Asp-130.

The protein belongs to the HisA/HisF family. In terms of assembly, heterodimer of HisH and HisF.

It is found in the cytoplasm. It carries out the reaction 5-[(5-phospho-1-deoxy-D-ribulos-1-ylimino)methylamino]-1-(5-phospho-beta-D-ribosyl)imidazole-4-carboxamide + L-glutamine = D-erythro-1-(imidazol-4-yl)glycerol 3-phosphate + 5-amino-1-(5-phospho-beta-D-ribosyl)imidazole-4-carboxamide + L-glutamate + H(+). The protein operates within amino-acid biosynthesis; L-histidine biosynthesis; L-histidine from 5-phospho-alpha-D-ribose 1-diphosphate: step 5/9. In terms of biological role, IGPS catalyzes the conversion of PRFAR and glutamine to IGP, AICAR and glutamate. The HisF subunit catalyzes the cyclization activity that produces IGP and AICAR from PRFAR using the ammonia provided by the HisH subunit. In Dehalococcoides mccartyi (strain ATCC BAA-2266 / KCTC 15142 / 195) (Dehalococcoides ethenogenes (strain 195)), this protein is Imidazole glycerol phosphate synthase subunit HisF.